The following is a 145-amino-acid chain: Deoxyuridine 5'-triphosphate nucleotidohydrolase (145 aa).

Residues 63–65 (RSG), Asn-76, 80–82 (TID), and Lys-90 each bind substrate.

It belongs to the dUTPase family. Requires Mg(2+) as cofactor.

It carries out the reaction dUTP + H2O = dUMP + diphosphate + H(+). Its pathway is pyrimidine metabolism; dUMP biosynthesis; dUMP from dCTP (dUTP route): step 2/2. Functionally, this enzyme is involved in nucleotide metabolism: it produces dUMP, the immediate precursor of thymidine nucleotides and it decreases the intracellular concentration of dUTP so that uracil cannot be incorporated into DNA. The chain is Deoxyuridine 5'-triphosphate nucleotidohydrolase from Clostridium acetobutylicum (strain ATCC 824 / DSM 792 / JCM 1419 / IAM 19013 / LMG 5710 / NBRC 13948 / NRRL B-527 / VKM B-1787 / 2291 / W).